Reading from the N-terminus, the 415-residue chain is Serine hydroxymethyltransferase (415 aa).

(6S)-5,6,7,8-tetrahydrofolate is bound by residues Leu-117 and 121–123 (GHL). Lys-226 carries the post-translational modification N6-(pyridoxal phosphate)lysine.

It belongs to the SHMT family. Homodimer. Requires pyridoxal 5'-phosphate as cofactor.

It localises to the cytoplasm. It catalyses the reaction (6R)-5,10-methylene-5,6,7,8-tetrahydrofolate + glycine + H2O = (6S)-5,6,7,8-tetrahydrofolate + L-serine. Its pathway is one-carbon metabolism; tetrahydrofolate interconversion. It participates in amino-acid biosynthesis; glycine biosynthesis; glycine from L-serine: step 1/1. Catalyzes the reversible interconversion of serine and glycine with tetrahydrofolate (THF) serving as the one-carbon carrier. This reaction serves as the major source of one-carbon groups required for the biosynthesis of purines, thymidylate, methionine, and other important biomolecules. Also exhibits THF-independent aldolase activity toward beta-hydroxyamino acids, producing glycine and aldehydes, via a retro-aldol mechanism. The polypeptide is Serine hydroxymethyltransferase (Dehalococcoides mccartyi (strain ATCC BAA-2100 / JCM 16839 / KCTC 5957 / BAV1)).